Consider the following 894-residue polypeptide: Valine--tRNA ligase (894 aa).

The 'HIGH' region signature appears at 48–58; it reads PNVTGFLHMGH. Residues 527 to 531 carry the 'KMSKS' region motif; sequence KMSKS. Lys-530 provides a ligand contact to ATP. The stretch at 827–852 forms a coiled coil; that stretch reads LVDFDEEVKRINKSIEKLTRDIGMLS.

This sequence belongs to the class-I aminoacyl-tRNA synthetase family. ValS type 1 subfamily. In terms of assembly, monomer.

The protein localises to the cytoplasm. The catalysed reaction is tRNA(Val) + L-valine + ATP = L-valyl-tRNA(Val) + AMP + diphosphate. Its function is as follows. Catalyzes the attachment of valine to tRNA(Val). As ValRS can inadvertently accommodate and process structurally similar amino acids such as threonine, to avoid such errors, it has a 'posttransfer' editing activity that hydrolyzes mischarged Thr-tRNA(Val) in a tRNA-dependent manner. This is Valine--tRNA ligase from Bdellovibrio bacteriovorus (strain ATCC 15356 / DSM 50701 / NCIMB 9529 / HD100).